The sequence spans 82 residues: MKKLLGLVVSCRMQKTVIVEVKTQVKHALYGKRIMKKKRYAVHDPEKKASLGELIWIRTCRPISKTKKWIYDSSANASQSSR.

The protein belongs to the universal ribosomal protein uS17 family. As to quaternary structure, part of the 30S ribosomal subunit.

Its subcellular location is the plastid. It is found in the chloroplast. In terms of biological role, one of the primary rRNA binding proteins, it binds specifically to the 5'-end of 16S ribosomal RNA. The protein is Small ribosomal subunit protein uS17c (rps17) of Cyanidioschyzon merolae (strain NIES-3377 / 10D) (Unicellular red alga).